Reading from the N-terminus, the 236-residue chain is Leucyl/phenylalanyl-tRNA--protein transferase (236 aa).

It belongs to the L/F-transferase family.

It is found in the cytoplasm. It catalyses the reaction N-terminal L-lysyl-[protein] + L-leucyl-tRNA(Leu) = N-terminal L-leucyl-L-lysyl-[protein] + tRNA(Leu) + H(+). It carries out the reaction N-terminal L-arginyl-[protein] + L-leucyl-tRNA(Leu) = N-terminal L-leucyl-L-arginyl-[protein] + tRNA(Leu) + H(+). The enzyme catalyses L-phenylalanyl-tRNA(Phe) + an N-terminal L-alpha-aminoacyl-[protein] = an N-terminal L-phenylalanyl-L-alpha-aminoacyl-[protein] + tRNA(Phe). Its function is as follows. Functions in the N-end rule pathway of protein degradation where it conjugates Leu, Phe and, less efficiently, Met from aminoacyl-tRNAs to the N-termini of proteins containing an N-terminal arginine or lysine. This is Leucyl/phenylalanyl-tRNA--protein transferase from Nitrosomonas europaea (strain ATCC 19718 / CIP 103999 / KCTC 2705 / NBRC 14298).